The following is a 384-amino-acid chain: Probable zinc-binding alcohol dehydrogenase Rv1895 (384 aa).

Cys-38, His-59, Cys-89, Cys-92, Cys-95, and Cys-103 together coordinate Zn(2+).

The protein belongs to the zinc-containing alcohol dehydrogenase family. Requires Zn(2+) as cofactor.

It catalyses the reaction a primary alcohol + NAD(+) = an aldehyde + NADH + H(+). It carries out the reaction a secondary alcohol + NAD(+) = a ketone + NADH + H(+). This chain is Probable zinc-binding alcohol dehydrogenase Rv1895, found in Mycobacterium tuberculosis (strain ATCC 25618 / H37Rv).